A 135-amino-acid chain; its full sequence is C-type lectin BpLec (135 aa).

Intrachain disulfides connect Cys-3/Cys-14, Cys-31/Cys-131, Cys-38/Cys-133, and Cys-106/Cys-123. Residues 10-132 (MNGLCYKIFD…CESKNAFLCQ (123 aa)) form the C-type lectin domain. Ca(2+)-binding residues include Gln-96, Asp-98, Glu-104, Asn-119, and Asp-120. Residues 96–98 (QPD) carry the Galactose-binding motif.

This sequence belongs to the true venom lectin family. Homodimer; disulfide-linked. In terms of tissue distribution, expressed by the venom gland.

It is found in the secreted. In terms of biological role, this lectin displays hemagglutinating activity on dog (128'000 HU/mg) and cat erythrocytes, that is inhibited by beta-galactosides (D-galactose, D-lactose, and N-acetyl-D-galactosamine) and EDTA. In addition, has been shown to hemagglutinate promastigote forms of Leishmania amazonensis. Also inhibits Gram-positive (S.aureus ATCC 25923) (MIC is 31.25 ug/ml) but not Gram-negative (E.coli ATCC 25922) bacteria. Is a calcium-dependent lectin. The polypeptide is C-type lectin BpLec (Bothrops pauloensis (Neuwied's lancehead)).